The following is a 57-amino-acid chain: Large ribosomal subunit protein bL32 (57 aa).

It belongs to the bacterial ribosomal protein bL32 family.

This chain is Large ribosomal subunit protein bL32 (rpmF), found in Halalkalibacterium halodurans (strain ATCC BAA-125 / DSM 18197 / FERM 7344 / JCM 9153 / C-125) (Bacillus halodurans).